The chain runs to 211 residues: Protein-methionine-sulfoxide reductase heme-binding subunit MsrQ (211 aa).

5 helical membrane passes run 45–65, 82–102, 116–136, 153–173, and 178–198; these read HFTG…TPLA, LWCF…ELGV, PYLT…FTST, FVYL…KIIS, and IYAG…LSLF.

It belongs to the MsrQ family. Heterodimer of a catalytic subunit (MsrP) and a heme-binding subunit (MsrQ). FMN is required as a cofactor. The cofactor is heme b.

It is found in the cell inner membrane. Functionally, part of the MsrPQ system that repairs oxidized periplasmic proteins containing methionine sulfoxide residues (Met-O), using respiratory chain electrons. Thus protects these proteins from oxidative-stress damage caused by reactive species of oxygen and chlorine generated by the host defense mechanisms. MsrPQ is essential for the maintenance of envelope integrity under bleach stress, rescuing a wide series of structurally unrelated periplasmic proteins from methionine oxidation, including the primary periplasmic chaperone SurA and the lipoprotein Pal. MsrQ provides electrons for reduction to the reductase catalytic subunit MsrP, using the quinone pool of the respiratory chain. The sequence is that of Protein-methionine-sulfoxide reductase heme-binding subunit MsrQ from Escherichia coli O127:H6 (strain E2348/69 / EPEC).